Consider the following 32-residue polypeptide: Toxic phospholipase A2 (32 aa).

The protein belongs to the phospholipase A2 family. Group III subfamily. Requires Ca(2+) as cofactor.

It is found in the secreted. The protein localises to the nematocyst. The enzyme catalyses a 1,2-diacyl-sn-glycero-3-phosphocholine + H2O = a 1-acyl-sn-glycero-3-phosphocholine + a fatty acid + H(+). PLA2 catalyzes the calcium-dependent hydrolysis of the 2-acyl groups in 3-sn-phosphoglycerides. The chain is Toxic phospholipase A2 from Rhopilema nomadica (Mediteranean medusa).